The sequence spans 555 residues: Energy-dependent translational throttle protein EttA (555 aa).

2 ABC transporter domains span residues 6–259 (YTMH…AQEA) and 324–550 (LEVS…RIKY). 39-46 (GLNGAGKS) contributes to the ATP binding site. Residues 95–139 (SEVVNALKRLDEVYALYADPDADFDKLAAEQGRLEEIIQAHDGHN) form an arm region. A ptIM region spans residues 242–322 (GNYSSWLEQK…IPPGPRLGDK (81 aa)). Residue 356-363 (GPNGAGKS) coordinates ATP.

This sequence belongs to the ABC transporter superfamily. ABCF family. Translational throttle EttA subfamily. In terms of assembly, monomer. Probably contacts ribosomal proteins L1, L5, L33 and S7, the 16S and 23S rRNA and the P-site containing tRNA(fMet).

Its subcellular location is the cytoplasm. The catalysed reaction is ATP + H2O = ADP + phosphate + H(+). In terms of biological role, a translation factor that gates the progression of the 70S ribosomal initiation complex (IC, containing tRNA(fMet) in the P-site) into the translation elongation cycle by using a mechanism sensitive to the ATP/ADP ratio. Binds to the 70S ribosome E-site where it modulates the state of the translating ribosome during subunit translocation. ATP hydrolysis probably frees it from the ribosome, which can enter the elongation phase. The polypeptide is Energy-dependent translational throttle protein EttA (Escherichia coli O157:H7).